The sequence spans 750 residues: Photosystem I P700 chlorophyll a apoprotein A1 (750 aa).

Helical transmembrane passes span V70 to A93, L156 to H179, L195 to L219, T291 to Y309, W346 to Y369, L385 to V411, A433 to H455, and F531 to L549. Residues C573 and C582 each contribute to the [4Fe-4S] cluster site. Helical transmembrane passes span H589–W610 and L664–F686. Position 675 (H675) interacts with chlorophyll a'. Chlorophyll a is bound by residues M683 and Y691. W692 serves as a coordination point for phylloquinone. Residues A724 to A744 form a helical membrane-spanning segment.

Belongs to the PsaA/PsaB family. The PsaA/B heterodimer binds the P700 chlorophyll special pair and subsequent electron acceptors. PSI consists of a core antenna complex that captures photons, and an electron transfer chain that converts photonic excitation into a charge separation. The eukaryotic PSI reaction center is composed of at least 11 subunits. P700 is a chlorophyll a/chlorophyll a' dimer, A0 is one or more chlorophyll a, A1 is one or both phylloquinones and FX is a shared 4Fe-4S iron-sulfur center. serves as cofactor.

The protein resides in the plastid. It localises to the chloroplast thylakoid membrane. It catalyses the reaction reduced [plastocyanin] + hnu + oxidized [2Fe-2S]-[ferredoxin] = oxidized [plastocyanin] + reduced [2Fe-2S]-[ferredoxin]. In terms of biological role, psaA and PsaB bind P700, the primary electron donor of photosystem I (PSI), as well as the electron acceptors A0, A1 and FX. PSI is a plastocyanin-ferredoxin oxidoreductase, converting photonic excitation into a charge separation, which transfers an electron from the donor P700 chlorophyll pair to the spectroscopically characterized acceptors A0, A1, FX, FA and FB in turn. Oxidized P700 is reduced on the lumenal side of the thylakoid membrane by plastocyanin. This chain is Photosystem I P700 chlorophyll a apoprotein A1, found in Angiopteris evecta (Mule's foot fern).